Here is a 388-residue protein sequence, read N- to C-terminus: LL-diaminopimelate aminotransferase (388 aa).

Substrate-binding residues include Y16 and G41. Pyridoxal 5'-phosphate contacts are provided by residues Y70, 104 to 105 (SK), Y129, N179, Y210, and 239 to 241 (SLS). Residues K105, Y129, and N179 each coordinate substrate. K242 bears the N6-(pyridoxal phosphate)lysine mark. A pyridoxal 5'-phosphate-binding site is contributed by R250. R368 serves as a coordination point for substrate.

This sequence belongs to the class-I pyridoxal-phosphate-dependent aminotransferase family. LL-diaminopimelate aminotransferase subfamily. Homodimer. Pyridoxal 5'-phosphate serves as cofactor.

The enzyme catalyses (2S,6S)-2,6-diaminopimelate + 2-oxoglutarate = (S)-2,3,4,5-tetrahydrodipicolinate + L-glutamate + H2O + H(+). It functions in the pathway amino-acid biosynthesis; L-lysine biosynthesis via DAP pathway; LL-2,6-diaminopimelate from (S)-tetrahydrodipicolinate (aminotransferase route): step 1/1. Involved in the synthesis of meso-diaminopimelate (m-DAP or DL-DAP), required for both lysine and peptidoglycan biosynthesis. Catalyzes the direct conversion of tetrahydrodipicolinate to LL-diaminopimelate. The polypeptide is LL-diaminopimelate aminotransferase (Oleidesulfovibrio alaskensis (strain ATCC BAA-1058 / DSM 17464 / G20) (Desulfovibrio alaskensis)).